The chain runs to 339 residues: Biotin synthase (339 aa).

Positions 55–282 constitute a Radical SAM core domain; that stretch reads NAVQLSTLLS…KAVVRLSAGR (228 aa). The [4Fe-4S] cluster site is built by Cys-70, Cys-74, and Cys-77. 4 residues coordinate [2Fe-2S] cluster: Cys-114, Cys-145, Cys-205, and Arg-277.

It belongs to the radical SAM superfamily. Biotin synthase family. Homodimer. It depends on [4Fe-4S] cluster as a cofactor. Requires [2Fe-2S] cluster as cofactor.

It catalyses the reaction (4R,5S)-dethiobiotin + (sulfur carrier)-SH + 2 reduced [2Fe-2S]-[ferredoxin] + 2 S-adenosyl-L-methionine = (sulfur carrier)-H + biotin + 2 5'-deoxyadenosine + 2 L-methionine + 2 oxidized [2Fe-2S]-[ferredoxin]. Its pathway is cofactor biosynthesis; biotin biosynthesis; biotin from 7,8-diaminononanoate: step 2/2. Functionally, catalyzes the conversion of dethiobiotin (DTB) to biotin by the insertion of a sulfur atom into dethiobiotin via a radical-based mechanism. This is Biotin synthase from Burkholderia cenocepacia (strain ATCC BAA-245 / DSM 16553 / LMG 16656 / NCTC 13227 / J2315 / CF5610) (Burkholderia cepacia (strain J2315)).